The primary structure comprises 336 residues: 4-hydroxythreonine-4-phosphate dehydrogenase (336 aa).

T140 is a substrate binding site. A divalent metal cation contacts are provided by H171, H216, and H271. The substrate site is built by K279, N288, and R297.

This sequence belongs to the PdxA family. In terms of assembly, homodimer. The cofactor is Zn(2+). Mg(2+) serves as cofactor. Co(2+) is required as a cofactor.

It is found in the cytoplasm. The enzyme catalyses 4-(phosphooxy)-L-threonine + NAD(+) = 3-amino-2-oxopropyl phosphate + CO2 + NADH. It functions in the pathway cofactor biosynthesis; pyridoxine 5'-phosphate biosynthesis; pyridoxine 5'-phosphate from D-erythrose 4-phosphate: step 4/5. Its function is as follows. Catalyzes the NAD(P)-dependent oxidation of 4-(phosphooxy)-L-threonine (HTP) into 2-amino-3-oxo-4-(phosphooxy)butyric acid which spontaneously decarboxylates to form 3-amino-2-oxopropyl phosphate (AHAP). The sequence is that of 4-hydroxythreonine-4-phosphate dehydrogenase from Erythrobacter litoralis (strain HTCC2594).